A 107-amino-acid chain; its full sequence is Nucleoid-associated protein A1C_06705 (107 aa).

This sequence belongs to the YbaB/EbfC family. In terms of assembly, homodimer.

It localises to the cytoplasm. The protein resides in the nucleoid. In terms of biological role, binds to DNA and alters its conformation. May be involved in regulation of gene expression, nucleoid organization and DNA protection. This is Nucleoid-associated protein A1C_06705 from Rickettsia akari (strain Hartford).